Here is a 2238-residue protein sequence, read N- to C-terminus: Golgin subfamily A member 4 (2238 aa).

Positions 1 to 90 are disordered; sequence MFKKLKQKIS…QTFAQKLQLR (90 aa). Ser10 carries the post-translational modification Phosphoserine. The segment covering 12 to 41 has biased composition (low complexity); sequence EQQQLQQALAPAQASSSSSTPTRTRSRTSS. Residue Thr39 is modified to Phosphothreonine. The residue at position 41 (Ser41) is a Phosphoserine. Composition is skewed to polar residues over residues 52 to 62 and 73 to 85; these read NRENASTQATK and SPSQSGDTQTFAQ. Phosphoserine occurs at positions 93 and 100. Disordered regions lie at residues 132–154, 1695–1744, and 1770–1789; these read AAAFDPPSDMESEAEDAPWNSDG, LKER…SQDC, and LEQGEGEARPSQPEAQHRAL. The segment at 154 to 224 is interaction with MACF1; that stretch reads GLSREQLLQR…EELQMDQQAK (71 aa). The stretch at 156-2161 forms a coiled coil; the sequence is SREQLLQRLR…RYEKNACAAT (2006 aa). Over residues 1695–1711 the composition is skewed to basic and acidic residues; that stretch reads LKEREKQVHSLEDKLKN. Residues 2178–2225 enclose the GRIP domain; the sequence is LFGEPTEFEYLRKVMFEYMMGRETKTMAKVITTVLKFPDDQAQKILER.

As to quaternary structure, homodimer. Interacts with GTP-bound ARL1 and ARL3. Interacts with MACF1. Directly interacts with TBC1D23. Interacts with FAM91A1; this interaction may be mediated by TBC1D23. In terms of tissue distribution, ubiquitous. Highly expressed in oligodendrocyte precursors, particularly at a stage just prior to myelination.

It is found in the cytoplasm. The protein resides in the golgi apparatus membrane. Its subcellular location is the golgi apparatus. It localises to the trans-Golgi network membrane. Its function is as follows. Involved in vesicular trafficking at the Golgi apparatus level. May play a role in delivery of transport vesicles containing GPI-linked proteins from the trans-Golgi network through its interaction with MACF1. Involved in endosome-to-Golgi trafficking. The sequence is that of Golgin subfamily A member 4 (Golga4) from Mus musculus (Mouse).